The following is a 343-amino-acid chain: Putative outer membrane protein y4fJ (343 aa).

The first 17 residues, 1-17, serve as a signal peptide directing secretion; it reads MRMNFSTVLLGSSVALA.

The protein belongs to the alphaproteobacteria porin family.

It is found in the cell outer membrane. May act as an outer membrane pore. This Sinorhizobium fredii (strain NBRC 101917 / NGR234) protein is Putative outer membrane protein y4fJ.